Consider the following 346-residue polypeptide: tRNA/tmRNA (uracil-C(5))-methyltransferase (346 aa).

S-adenosyl-L-methionine is bound by residues Gln-168, Tyr-197, Asn-202, Glu-218, and Asp-278. Cys-303 serves as the catalytic Nucleophile. The active-site Proton acceptor is the Glu-337.

This sequence belongs to the class I-like SAM-binding methyltransferase superfamily. RNA M5U methyltransferase family. TrmA subfamily.

It catalyses the reaction uridine(54) in tRNA + S-adenosyl-L-methionine = 5-methyluridine(54) in tRNA + S-adenosyl-L-homocysteine + H(+). The enzyme catalyses uridine(341) in tmRNA + S-adenosyl-L-methionine = 5-methyluridine(341) in tmRNA + S-adenosyl-L-homocysteine + H(+). In terms of biological role, dual-specificity methyltransferase that catalyzes the formation of 5-methyluridine at position 54 (m5U54) in all tRNAs, and that of position 341 (m5U341) in tmRNA (transfer-mRNA). This is tRNA/tmRNA (uracil-C(5))-methyltransferase from Campylobacter lari (strain RM2100 / D67 / ATCC BAA-1060).